The following is a 197-amino-acid chain: HTH-type transcriptional regulator BetI (197 aa).

The HTH tetR-type domain maps to P8–L68. Residues S31–F50 constitute a DNA-binding region (H-T-H motif).

It participates in amine and polyamine biosynthesis; betaine biosynthesis via choline pathway [regulation]. In terms of biological role, repressor involved in the biosynthesis of the osmoprotectant glycine betaine. It represses transcription of the choline transporter BetT and the genes of BetAB involved in the synthesis of glycine betaine. This chain is HTH-type transcriptional regulator BetI, found in Pseudomonas fluorescens (strain SBW25).